A 762-amino-acid chain; its full sequence is cGMP-dependent protein kinase 2 (762 aa).

Positions 1 to 25 (MGNGSVKPKHSKHPDGHSGNLTTDA) are disordered. The N-myristoyl glycine moiety is linked to residue glycine 2. The stretch at 23-85 (TDALRNKVTE…CIQLNKLQDV (63 aa)) forms a coiled coil. Phosphoserine occurs at positions 110 and 117. Residues 117-138 (SRRGAKAGVSAEPTTRTYDLNK) are disordered. A cGMP-binding, high affinity; cAMP-binding, moderate affinity region spans residues 168-283 (FLKRLDPQQI…DEQYRNFLRS (116 aa)). 3',5'-cyclic AMP is bound by residues 232-235 (GELA) and 242-243 (RT). 3',5'-cyclic GMP contacts are provided by residues 232-235 (GELA), 242-243 (RT), lysine 347, 356-359 (GEKA), 366-367 (RS), aspartate 412, and arginine 415. The segment at 286 to 416 (LLKNLPEDKL…NLNRDDEKRH (131 aa)) is cGMP-binding, high affinity; cAMP-binding, low affinity. Serine 431 is subject to Phosphoserine. In terms of domain architecture, Protein kinase spans 453 to 711 (LEIIATLGVG…INDIKKHRWL (259 aa)). Residues 459 to 467 (LGVGGFGRV) and lysine 482 each bind ATP. Aspartate 576 acts as the Proton acceptor in catalysis. Threonine 609 carries the post-translational modification Phosphothreonine. The AGC-kinase C-terminal domain maps to 712-762 (NGFNWEGLKARSLPSPLQRELKGPIDHSYFDKYPPEKGMPPDELSGWDKDF). The segment at 740–762 (YFDKYPPEKGMPPDELSGWDKDF) is disordered.

This sequence belongs to the protein kinase superfamily. AGC Ser/Thr protein kinase family. cGMP subfamily. As to quaternary structure, interacts with GRIA1/GLUR1. Myristoylation mediates membrane localization. Highly concentrated in brain, lung and intestinal mucosa.

The protein resides in the apical cell membrane. The catalysed reaction is L-seryl-[protein] + ATP = O-phospho-L-seryl-[protein] + ADP + H(+). It carries out the reaction L-threonyl-[protein] + ATP = O-phospho-L-threonyl-[protein] + ADP + H(+). With respect to regulation, binding of cGMP results in enzyme activation. Its function is as follows. Crucial regulator of intestinal secretion and bone growth. Phosphorylates and activates CFTR on the plasma membrane. Plays a key role in intestinal secretion by regulating cGMP-dependent translocation of CFTR in jejunum. Acts downstream of NMDAR to activate the plasma membrane accumulation of GRIA1/GLUR1 in synapse and increase synaptic plasticity. Phosphorylates GRIA1/GLUR1 at Ser-863. Acts as a regulator of gene expression and activator of the extracellular signal-regulated kinases MAPK3/ERK1 and MAPK1/ERK2 in mechanically stimulated osteoblasts. Under fluid shear stress, mediates ERK activation and subsequent induction of FOS, FOSL1/FRA1, FOSL2/FRA2 and FOSB that play a key role in the osteoblast anabolic response to mechanical stimulation. The chain is cGMP-dependent protein kinase 2 (PRKG2) from Homo sapiens (Human).